Consider the following 362-residue polypeptide: 4-hydroxythreonine-4-phosphate dehydrogenase (362 aa).

T149 contacts substrate. Residues H184, H229, and H295 each coordinate a divalent metal cation. Substrate is bound by residues K303, N312, and R321.

This sequence belongs to the PdxA family. Homodimer. A divalent metal cation serves as cofactor.

The protein resides in the cytoplasm. It catalyses the reaction 4-(phosphooxy)-L-threonine + NAD(+) = 3-amino-2-oxopropyl phosphate + CO2 + NADH. It functions in the pathway cofactor biosynthesis; pyridoxine 5'-phosphate biosynthesis; pyridoxine 5'-phosphate from D-erythrose 4-phosphate: step 4/5. In terms of biological role, catalyzes the NAD(P)-dependent oxidation of 4-(phosphooxy)-L-threonine (HTP) into 2-amino-3-oxo-4-(phosphooxy)butyric acid which spontaneously decarboxylates to form 3-amino-2-oxopropyl phosphate (AHAP). This is 4-hydroxythreonine-4-phosphate dehydrogenase from Nostoc sp. (strain PCC 7120 / SAG 25.82 / UTEX 2576).